The following is a 215-amino-acid chain: Pyridoxine/pyridoxamine 5'-phosphate oxidase (215 aa).

Residues 11–14 (RRDY) and lysine 69 each bind substrate. FMN-binding positions include 64-69 (RVVLLK), 79-80 (YT), lysine 86, and glutamine 108. Residues tyrosine 126, arginine 130, and serine 134 each contribute to the substrate site. FMN contacts are provided by residues 143–144 (QS) and tryptophan 188. Residue 194–196 (RLH) coordinates substrate. Arginine 198 contacts FMN.

The protein belongs to the pyridoxamine 5'-phosphate oxidase family. Homodimer. FMN is required as a cofactor.

The enzyme catalyses pyridoxamine 5'-phosphate + O2 + H2O = pyridoxal 5'-phosphate + H2O2 + NH4(+). The catalysed reaction is pyridoxine 5'-phosphate + O2 = pyridoxal 5'-phosphate + H2O2. It participates in cofactor metabolism; pyridoxal 5'-phosphate salvage; pyridoxal 5'-phosphate from pyridoxamine 5'-phosphate: step 1/1. It functions in the pathway cofactor metabolism; pyridoxal 5'-phosphate salvage; pyridoxal 5'-phosphate from pyridoxine 5'-phosphate: step 1/1. Catalyzes the oxidation of either pyridoxine 5'-phosphate (PNP) or pyridoxamine 5'-phosphate (PMP) into pyridoxal 5'-phosphate (PLP). This chain is Pyridoxine/pyridoxamine 5'-phosphate oxidase, found in Legionella pneumophila (strain Paris).